We begin with the raw amino-acid sequence, 201 residues long: Protein TV1384 (201 aa).

The AMMECR1 domain occupies 11–200 (DIGAKAVMLA…EIEPNGKVEQ (190 aa)).

This chain is Protein TV1384, found in Thermoplasma volcanium (strain ATCC 51530 / DSM 4299 / JCM 9571 / NBRC 15438 / GSS1).